We begin with the raw amino-acid sequence, 126 residues long: uncharacterized protein (126 aa).

Residues 1 to 27 (MSKSKTPNFDDMEVLDDTNDEYDDSES) are disordered. Residues 10-27 (DDMEVLDDTNDEYDDSES) show a composition bias toward acidic residues.

This is an uncharacterized protein from Halorubrum sp. PV6 (HRPV-1).